A 683-amino-acid chain; its full sequence is DNA ligase (683 aa).

Residues 36–40, 85–86, and glutamate 121 each bind NAD(+); these read DAVYD and SL. Lysine 123 serves as the catalytic N6-AMP-lysine intermediate. 4 residues coordinate NAD(+): arginine 144, glutamate 180, lysine 296, and lysine 320. Zn(2+)-binding residues include cysteine 413, cysteine 416, cysteine 431, and cysteine 437. In terms of domain architecture, BRCT spans 605-683; it reads PSEGHLSGKV…ESGWRVLAGL (79 aa).

The protein belongs to the NAD-dependent DNA ligase family. LigA subfamily. Mg(2+) serves as cofactor. Requires Mn(2+) as cofactor.

The enzyme catalyses NAD(+) + (deoxyribonucleotide)n-3'-hydroxyl + 5'-phospho-(deoxyribonucleotide)m = (deoxyribonucleotide)n+m + AMP + beta-nicotinamide D-nucleotide.. In terms of biological role, DNA ligase that catalyzes the formation of phosphodiester linkages between 5'-phosphoryl and 3'-hydroxyl groups in double-stranded DNA using NAD as a coenzyme and as the energy source for the reaction. It is essential for DNA replication and repair of damaged DNA. The sequence is that of DNA ligase from Gluconobacter oxydans (strain 621H) (Gluconobacter suboxydans).